Here is a 156-residue protein sequence, read N- to C-terminus: Phosphopantetheine adenylyltransferase (156 aa).

Thr10 provides a ligand contact to substrate. Residues 10–11 (TF) and His18 each bind ATP. The substrate site is built by Lys42, Leu74, and Arg88. Residues 89–91 (GLR), Glu99, and 124–130 (NAFISSS) each bind ATP.

This sequence belongs to the bacterial CoaD family. In terms of assembly, homohexamer. The cofactor is Mg(2+).

Its subcellular location is the cytoplasm. The catalysed reaction is (R)-4'-phosphopantetheine + ATP + H(+) = 3'-dephospho-CoA + diphosphate. It functions in the pathway cofactor biosynthesis; coenzyme A biosynthesis; CoA from (R)-pantothenate: step 4/5. Its function is as follows. Reversibly transfers an adenylyl group from ATP to 4'-phosphopantetheine, yielding dephospho-CoA (dPCoA) and pyrophosphate. This chain is Phosphopantetheine adenylyltransferase, found in Campylobacter curvus (strain 525.92).